The sequence spans 599 residues: Pentatricopeptide repeat-containing protein At3g62540, mitochondrial (599 aa).

Residues 1 to 99 (MAAAPWLYLS…RGFSSGSSNV (99 aa)) constitute a mitochondrion transit peptide. 10 PPR repeats span residues 194-228 (ASRT…GLLT), 230-262 (ETFT…KFKI), 263-293 (GVET…LKER), 297-331 (NMMT…GLKP), 332-366 (DIVA…GPCP), 367-401 (NVRS…GLQP), 402-436 (DAAV…GHPP), 437-471 (DGKT…EIEP), 472-506 (SIHT…GICP), and 507-541 (DDNS…GMKT).

This sequence belongs to the PPR family. P subfamily.

The protein resides in the mitochondrion. This is Pentatricopeptide repeat-containing protein At3g62540, mitochondrial from Arabidopsis thaliana (Mouse-ear cress).